Reading from the N-terminus, the 660-residue chain is Bifunctional polymyxin resistance protein ArnA (660 aa).

The formyltransferase ArnAFT stretch occupies residues 1–304 (MKAVIFAYHD…TLGLVAGARL (304 aa)). Catalysis depends on His104, which acts as the Proton donor; for formyltransferase activity. Residues Arg114 and 136–140 (VKRAD) each bind (6R)-10-formyltetrahydrofolate. Residues 314-660 (RRIRVLILGV…RSVDVAERAS (347 aa)) are dehydrogenase ArnADH. NAD(+) is bound by residues Asp347 and 368-369 (DI). UDP-alpha-D-glucuronate is bound by residues Ala393, Tyr398, and 432–433 (TS). The Proton acceptor; for decarboxylase activity role is filled by Glu434. UDP-alpha-D-glucuronate is bound by residues Arg460, Asn492, 526-535 (KLIDGGQQKR), and Tyr613. Catalysis depends on Arg619, which acts as the Proton donor; for decarboxylase activity.

In the N-terminal section; belongs to the Fmt family. UDP-L-Ara4N formyltransferase subfamily. The protein in the C-terminal section; belongs to the NAD(P)-dependent epimerase/dehydratase family. UDP-glucuronic acid decarboxylase subfamily. As to quaternary structure, homohexamer, formed by a dimer of trimers.

It carries out the reaction UDP-alpha-D-glucuronate + NAD(+) = UDP-beta-L-threo-pentopyranos-4-ulose + CO2 + NADH. It catalyses the reaction UDP-4-amino-4-deoxy-beta-L-arabinose + (6R)-10-formyltetrahydrofolate = UDP-4-deoxy-4-formamido-beta-L-arabinose + (6S)-5,6,7,8-tetrahydrofolate + H(+). It participates in nucleotide-sugar biosynthesis; UDP-4-deoxy-4-formamido-beta-L-arabinose biosynthesis; UDP-4-deoxy-4-formamido-beta-L-arabinose from UDP-alpha-D-glucuronate: step 1/3. The protein operates within nucleotide-sugar biosynthesis; UDP-4-deoxy-4-formamido-beta-L-arabinose biosynthesis; UDP-4-deoxy-4-formamido-beta-L-arabinose from UDP-alpha-D-glucuronate: step 3/3. Its pathway is bacterial outer membrane biogenesis; lipopolysaccharide biosynthesis. Functionally, bifunctional enzyme that catalyzes the oxidative decarboxylation of UDP-glucuronic acid (UDP-GlcUA) to UDP-4-keto-arabinose (UDP-Ara4O) and the addition of a formyl group to UDP-4-amino-4-deoxy-L-arabinose (UDP-L-Ara4N) to form UDP-L-4-formamido-arabinose (UDP-L-Ara4FN). The modified arabinose is attached to lipid A and is required for resistance to polymyxin and cationic antimicrobial peptides. The chain is Bifunctional polymyxin resistance protein ArnA from Salmonella dublin (strain CT_02021853).